A 779-amino-acid polypeptide reads, in one-letter code: Probable ATP-dependent RNA helicase DHX40 (779 aa).

Residues 1–53 (MSRFPAVAGRAPRRQEEGERPVELQEERPSAVRIADREEKGCTSQEGGTTPTF) form a disordered region. The span at 13–41 (RRQEEGERPVELQEERPSAVRIADREEKG) shows a compositional bias: basic and acidic residues. Residues 42 to 53 (CTSQEGGTTPTF) show a composition bias toward polar residues. In terms of domain architecture, Helicase ATP-binding spans 63 to 231 (IQAVRDNSFL…FGNCPIFDIP (169 aa)). 76–83 (GNTGSGKT) provides a ligand contact to ATP. Residues 173–176 (DEAH) carry the DEAH box motif. Residues 263 to 442 (TMDIHLNEMA…SVVLTLKCLA (180 aa)) enclose the Helicase C-terminal domain.

The protein belongs to the DEAD box helicase family. DEAH subfamily.

It catalyses the reaction ATP + H2O = ADP + phosphate + H(+). Its function is as follows. Probable ATP-dependent RNA helicase. The sequence is that of Probable ATP-dependent RNA helicase DHX40 (Dhx40) from Rattus norvegicus (Rat).